A 486-amino-acid polypeptide reads, in one-letter code: Aspartyl/glutamyl-tRNA(Asn/Gln) amidotransferase subunit B (486 aa).

It belongs to the GatB/GatE family. GatB subfamily. As to quaternary structure, heterotrimer of A, B and C subunits.

The catalysed reaction is L-glutamyl-tRNA(Gln) + L-glutamine + ATP + H2O = L-glutaminyl-tRNA(Gln) + L-glutamate + ADP + phosphate + H(+). It carries out the reaction L-aspartyl-tRNA(Asn) + L-glutamine + ATP + H2O = L-asparaginyl-tRNA(Asn) + L-glutamate + ADP + phosphate + 2 H(+). Allows the formation of correctly charged Asn-tRNA(Asn) or Gln-tRNA(Gln) through the transamidation of misacylated Asp-tRNA(Asn) or Glu-tRNA(Gln) in organisms which lack either or both of asparaginyl-tRNA or glutaminyl-tRNA synthetases. The reaction takes place in the presence of glutamine and ATP through an activated phospho-Asp-tRNA(Asn) or phospho-Glu-tRNA(Gln). The chain is Aspartyl/glutamyl-tRNA(Asn/Gln) amidotransferase subunit B from Orientia tsutsugamushi (strain Boryong) (Rickettsia tsutsugamushi).